The following is a 299-amino-acid chain: MDQHLDAYCMHLRSERQVSPHTLEAYRRDLGKVLAYCQKAQVSSWSDLDIQHLRSFTARQHQQGQSSRSLARMLSAVRGFYKYLNREGICQHDPANGLSPPKGERRLPKTLDTDRAAQLLDGGVEDDFLAHRDQAILELLYSSGLRLSELTGLNLDQLDLRDGLVQVLGKGSKTRVLPVGSKARQALEVWLPLRALTNPQDDAVFVSQQGKRLGPRAIQVRLKAAGERELGQNLHPHMLRHSFASHLLESSQDLRAVQELLGHADIKTTQIYTHLDFQHLATVYDSAHPRAKRKGTADD.

The 85-residue stretch at 1 to 85 folds into the Core-binding (CB) domain; it reads MDQHLDAYCM…AVRGFYKYLN (85 aa). The region spanning 106–285 is the Tyr recombinase domain; the sequence is RLPKTLDTDR…DFQHLATVYD (180 aa). Active-site residues include R146, K170, H237, R240, and H263. The active-site O-(3'-phospho-DNA)-tyrosine intermediate is Y272.

Belongs to the 'phage' integrase family. XerC subfamily. In terms of assembly, forms a cyclic heterotetrameric complex composed of two molecules of XerC and two molecules of XerD.

The protein resides in the cytoplasm. Functionally, site-specific tyrosine recombinase, which acts by catalyzing the cutting and rejoining of the recombining DNA molecules. The XerC-XerD complex is essential to convert dimers of the bacterial chromosome into monomers to permit their segregation at cell division. It also contributes to the segregational stability of plasmids. This chain is Tyrosine recombinase XerC, found in Pseudomonas syringae pv. syringae (strain B728a).